The sequence spans 89 residues: Probable monothiol glutaredoxin GrlA (89 aa).

The Glutaredoxin domain maps to 1–89 (MLYMKGTPKM…EPMLRDAVAA (89 aa)). Lysine 5 is a glutathione binding site. Cysteine 13 is a [2Fe-2S] cluster binding site. Glutathione contacts are provided by residues arginine 42, phenylalanine 54, and 67–68 (SD).

This sequence belongs to the glutaredoxin family. Monothiol subfamily.

The protein is Probable monothiol glutaredoxin GrlA (grlA) of Legionella pneumophila subsp. pneumophila (strain Philadelphia 1 / ATCC 33152 / DSM 7513).